The sequence spans 250 residues: Cell division protein ZapD (250 aa).

The protein belongs to the ZapD family. As to quaternary structure, interacts with FtsZ.

The protein localises to the cytoplasm. Its function is as follows. Cell division factor that enhances FtsZ-ring assembly. Directly interacts with FtsZ and promotes bundling of FtsZ protofilaments, with a reduction in FtsZ GTPase activity. This chain is Cell division protein ZapD, found in Photorhabdus laumondii subsp. laumondii (strain DSM 15139 / CIP 105565 / TT01) (Photorhabdus luminescens subsp. laumondii).